The primary structure comprises 109 residues: Large ribosomal subunit protein uL22 (109 aa).

It belongs to the universal ribosomal protein uL22 family. As to quaternary structure, part of the 50S ribosomal subunit.

Its function is as follows. This protein binds specifically to 23S rRNA; its binding is stimulated by other ribosomal proteins, e.g. L4, L17, and L20. It is important during the early stages of 50S assembly. It makes multiple contacts with different domains of the 23S rRNA in the assembled 50S subunit and ribosome. The globular domain of the protein is located near the polypeptide exit tunnel on the outside of the subunit, while an extended beta-hairpin is found that lines the wall of the exit tunnel in the center of the 70S ribosome. This Chromobacterium violaceum (strain ATCC 12472 / DSM 30191 / JCM 1249 / CCUG 213 / NBRC 12614 / NCIMB 9131 / NCTC 9757 / MK) protein is Large ribosomal subunit protein uL22.